An 883-amino-acid chain; its full sequence is Glutamate receptor 2 (883 aa).

Positions 1 to 24 are cleaved as a signal peptide; sequence MQKIMHISVLLSPILWGLIFGVSS. Over 25–543 the chain is Extracellular; it reads NSIQIGGLFP…GVFSFLDPLA (519 aa). The cysteines at positions 78 and 330 are disulfide-linked. Residues N256, N370, N406, and N413 are each glycosylated (N-linked (GlcNAc...) asparagine). P499, T501, and R506 together coordinate L-glutamate. Residues 544–564 traverse the membrane as a helical segment; sequence YEIWMCIVFAYIGVSVVLFLV. At 565–591 the chain is on the cytoplasmic side; that stretch reads SRFSPYEWHTEEFEDGRETQSSESTNE. Positions 592 to 607 form an intramembrane region, helical; Pore-forming; the sequence is FGIFNSLWFSLGAFMR. An intramembrane segment occupies 608–610; sequence QGC. C610 carries the S-palmitoyl cysteine lipid modification. The Cytoplasmic portion of the chain corresponds to 611–616; it reads DISPRS. A helical transmembrane segment spans residues 617-637; the sequence is LSGRIVGGVWWFFTLIIISSY. At 638–812 the chain is on the extracellular side; that stretch reads TANLAAFLTV…EKTSALSLSN (175 aa). Residues S675 and T676 each coordinate L-glutamate. At S683 the chain carries Phosphoserine; by PKC. S717 is modified (phosphoserine; by PKG). An L-glutamate-binding site is contributed by E726. C739 and C794 are oxidised to a cystine. The chain crosses the membrane as a helical span at residues 813-833; it reads VAGVFYILVGGLGLAMLVALI. Residues 834 to 883 are Cytoplasmic-facing; sequence EFCYKSRAEAKRMKVAKNAQNINPSSSQNSQNFATYKEGYNVYGIESVKI. A lipid anchor (S-palmitoyl cysteine) is attached at C836. S860 and S863 each carry phosphoserine. The interval 867 to 877 is required for interaction with IQSEC1; the sequence is ATYKEGYNVYG. Y876 is modified (phosphotyrosine). S880 carries the post-translational modification Phosphoserine.

It belongs to the glutamate-gated ion channel (TC 1.A.10.1) family. GRIA2 subfamily. Homotetramer or heterotetramer of pore-forming glutamate receptor subunits. Tetramers may be formed by the dimerization of dimers. May interact with MPP4. Forms a ternary complex with GRIP1 and CSPG4. Interacts with ATAD1 in an ATP-dependent manner. ATAD1-catalyzed ATP hydrolysis disrupts binding to ATAD1 and to GRIP1 and leads to AMPAR complex disassembly. Interacts with GRIP1 and GRIP2. Interacts with NSF via its C-terminus. Isoform 1, but not isoform 3, interacts with PICK1. Interacts with CACNG2. Interacts with GRIA1 and SYNDIG1. Part of a complex containing GRIA2, NSF and NAPA and/or NAPB. Interacts with SNX27 (via PDZ domain); the interaction is required for recycling to the plasma membrane when endocytosed and prevent degradation in lysosomes. Interacts with LRFN1. Found in a complex with GRIA1, GRIA3, GRIA4, CNIH2, CNIH3, CACNG2, CACNG3, CACNG4, CACNG5, CACNG7 and CACNG8. Interacts with CACNG5. Interacts with OLFM2. Interacts with AP4B1, AP4E1 and AP4M1; probably indirect it mediates the somatodendritic localization of GRIA2 in neurons. Forms a complex with GRIP1, NSG1 and STX12; controls the intracellular fate of AMPAR and the endosomal sorting of the GRIA2 subunit toward recycling and membrane targeting. Interacts with IQSEC1; the interaction is required for ARF6 activation. Interacts (heterotetramer form) with CNIH2 and CNIH3; this interaction promotes expression at the plasma membrane and extensively modulates their gating properties by slowing deactivation and desensitization kinetics. Phosphorylation at Tyr-876 is required for interaction with IQSEC1 and ARF6 activation, which in turn triggers AMPAR internalization for persistent synaptic depression. Post-translationally, palmitoylated. Depalmitoylated upon L-glutamate stimulation. ZDHHC3/GODZ specifically palmitoylates Cys-610, which leads to Golgi retention and decreased cell surface expression. In contrast, Cys-836 palmitoylation does not affect cell surface expression but regulates stimulation-dependent endocytosis. In terms of processing, N-glycosylated. Ubiquitinated by RNF167, leading to its degradation.

It is found in the cell membrane. The protein resides in the postsynaptic cell membrane. Its subcellular location is the postsynaptic density membrane. The catalysed reaction is Ca(2+)(in) = Ca(2+)(out). It carries out the reaction Na(+)(in) = Na(+)(out). Functionally, ionotropic glutamate receptor that functions as a ligand-gated cation channel, gated by L-glutamate and glutamatergic agonists such as alpha-amino-3-hydroxy-5-methyl-4-isoxazolepropionic acid (AMPA), quisqualic acid, and kainic acid. L-glutamate acts as an excitatory neurotransmitter at many synapses in the central nervous system and plays an important role in fast excitatory synaptic transmission. Binding of the excitatory neurotransmitter L-glutamate induces a conformation change, leading to the opening of the cation channel, and thereby converts the chemical signal to an electrical impulse upon entry of monovalent and divalent cations such as sodium and calcium. The receptor then desensitizes rapidly and enters in a transient inactive state, characterized by the presence of bound agonist. In the presence of CACNG4 or CACNG7 or CACNG8, shows resensitization which is characterized by a delayed accumulation of current flux upon continued application of L-glutamate. Through complex formation with NSG1, GRIP1 and STX12 controls the intracellular fate of AMPAR and the endosomal sorting of the GRIA2 subunit toward recycling and membrane targeting. This chain is Glutamate receptor 2, found in Macaca fascicularis (Crab-eating macaque).